We begin with the raw amino-acid sequence, 468 residues long: Hydroxymethylglutaryl-CoA lyase, mitochondrial (468 aa).

The Pyruvate carboxyltransferase domain maps to 168 to 435 (VKIVEVGPRD…HTNVDLGKLI (268 aa)). Arg176 is a binding site for substrate. 3 residues coordinate a divalent metal cation: Asp177, His368, and His370. Residue Cys401 is part of the active site. Residue Asn410 coordinates a divalent metal cation.

It belongs to the HMG-CoA lyase family. In terms of assembly, homodimer. It depends on a divalent metal cation as a cofactor.

It is found in the mitochondrion matrix. The catalysed reaction is (3S)-3-hydroxy-3-methylglutaryl-CoA = acetoacetate + acetyl-CoA. Its pathway is metabolic intermediate metabolism; (S)-3-hydroxy-3-methylglutaryl-CoA degradation; acetoacetate from (S)-3-hydroxy-3-methylglutaryl-CoA: step 1/1. Functionally, involved in the catabolism of branched amino acids such as leucine. The protein is Hydroxymethylglutaryl-CoA lyase, mitochondrial (HMGCL) of Arabidopsis thaliana (Mouse-ear cress).